The chain runs to 130 residues: Small ribosomal subunit protein uS9 (130 aa).

Belongs to the universal ribosomal protein uS9 family.

The sequence is that of Small ribosomal subunit protein uS9 from Geobacillus thermodenitrificans (strain NG80-2).